The sequence spans 623 residues: Probable lysophospholipase 5 (623 aa).

A signal peptide spans 1–19 (MKLSSFGLFLALQLLPALG). Residues 67 to 607 (ACPSGSLLRP…NQYCWNGTIA (541 aa)) form the PLA2c domain. 19 N-linked (GlcNAc...) asparagine glycosylation sites follow: N118, N153, N187, N232, N256, N264, N293, N331, N360, N367, N400, N403, N474, N508, N513, N537, N564, N586, and N603.

This sequence belongs to the lysophospholipase family.

Its subcellular location is the secreted. The enzyme catalyses a 1-acyl-sn-glycero-3-phosphocholine + H2O = sn-glycerol 3-phosphocholine + a fatty acid + H(+). Functionally, catalyzes the release of fatty acids from lysophospholipids. The sequence is that of Probable lysophospholipase 5 (plb5) from Schizosaccharomyces pombe (strain 972 / ATCC 24843) (Fission yeast).